We begin with the raw amino-acid sequence, 453 residues long: Probable glycine dehydrogenase (decarboxylating) subunit 1 (453 aa).

It belongs to the GcvP family. N-terminal subunit subfamily. In terms of assembly, the glycine cleavage system is composed of four proteins: P, T, L and H. In this organism, the P 'protein' is a heterodimer of two subunits.

It carries out the reaction N(6)-[(R)-lipoyl]-L-lysyl-[glycine-cleavage complex H protein] + glycine + H(+) = N(6)-[(R)-S(8)-aminomethyldihydrolipoyl]-L-lysyl-[glycine-cleavage complex H protein] + CO2. The glycine cleavage system catalyzes the degradation of glycine. The P protein binds the alpha-amino group of glycine through its pyridoxal phosphate cofactor; CO(2) is released and the remaining methylamine moiety is then transferred to the lipoamide cofactor of the H protein. The polypeptide is Probable glycine dehydrogenase (decarboxylating) subunit 1 (Erythrobacter litoralis (strain HTCC2594)).